Consider the following 93-residue polypeptide: uncharacterized protein (93 aa).

This is an uncharacterized protein from Gallid herpesvirus 2 (strain Chicken/Md5/ATCC VR-987) (GaHV-2).